Here is a 265-residue protein sequence, read N- to C-terminus: Isoprenyl transferase (265 aa).

Aspartate 35 is an active-site residue. Aspartate 35 serves as a coordination point for Mg(2+). Substrate contacts are provided by residues 36–39, tryptophan 40, arginine 48, histidine 52, and 80–82; these read GNGR and SIE. The active-site Proton acceptor is the asparagine 83. Substrate is bound by residues tryptophan 84, arginine 86, arginine 203, and 209-211; that span reads RIS. Glutamate 222 lines the Mg(2+) pocket.

This sequence belongs to the UPP synthase family. Homodimer. The cofactor is Mg(2+).

Its function is as follows. Catalyzes the condensation of isopentenyl diphosphate (IPP) with allylic pyrophosphates generating different type of terpenoids. This is Isoprenyl transferase from Chlorobaculum tepidum (strain ATCC 49652 / DSM 12025 / NBRC 103806 / TLS) (Chlorobium tepidum).